We begin with the raw amino-acid sequence, 163 residues long: Nucleotide-binding protein YajQ (163 aa).

Belongs to the YajQ family.

In terms of biological role, nucleotide-binding protein. This is Nucleotide-binding protein YajQ from Salmonella heidelberg (strain SL476).